The primary structure comprises 149 residues: Large ribosomal subunit protein bL9 (149 aa).

The protein belongs to the bacterial ribosomal protein bL9 family.

Functionally, binds to the 23S rRNA. The protein is Large ribosomal subunit protein bL9 of Anaeromyxobacter dehalogenans (strain 2CP-1 / ATCC BAA-258).